The chain runs to 459 residues: Pentatricopeptide repeat-containing protein At5g18390, mitochondrial (459 aa).

A mitochondrion-targeting transit peptide spans 1–7 (MLLLRRY). PPR repeat units follow at residues 110–144 (TSMEYEELAKSLASHKKYESMWKILKQMKDLSLDI), 145–175 (SGETLCFIIEQYGKNGHVDQAVELFNGVPKT), 181–215 (TVDVYNSLLHALCDVKMFHGAYALIRRMIRKGLKP), 216–250 (DKRTYAILVNGWCSAGKMKEAQEFLDEMSRRGFNP), 251–285 (PARGRDLLIEGLLNAGYLESAKEMVSKMTKGGFVP), 286–320 (DIQTFNILIEAISKSGEVEFCIEMYYTACKLGLCV), 321–355 (DIDTYKTLIPAVSKIGKIDEAFRLLNNCVEDGHKP), 356–390 (FPSLYAPIIKGMCRNGMFDDAFSFFSDMKVKAHPP), and 391–425 (NRPVYTMLITMCGRGGKFVDAANYLVEMTEMGLVP).

This sequence belongs to the PPR family. P subfamily.

Its subcellular location is the mitochondrion. The polypeptide is Pentatricopeptide repeat-containing protein At5g18390, mitochondrial (Arabidopsis thaliana (Mouse-ear cress)).